We begin with the raw amino-acid sequence, 169 residues long: Disulfide bond formation protein B 1 (169 aa).

At 1–14 (MSDDRLGLGRERRF) the chain is on the cytoplasmic side. The helical transmembrane segment at 15–31 (LVLLGIICLALIGGALY) threads the bilayer. Residues 32 to 49 (MQVVLGEAPCPLCILQRY) are Periplasmic-facing. A disulfide bridge connects residues Cys-41 and Cys-44. A helical membrane pass occupies residues 50–64 (ALLLIALFAFIGAAM). The Cytoplasmic portion of the chain corresponds to 65–71 (SSRRGVT). The chain crosses the membrane as a helical span at residues 72 to 89 (VMETLVVICALAGAGVAG). Topologically, residues 90–144 (HHVYTQFYPSVSCGIDVLQPIVDSLPLAKIFPLGFQVDGFCSTPYPPILGLSLAQ) are periplasmic. An intrachain disulfide couples Cys-102 to Cys-130. Residues 145–163 (WALVAFVLTVILVPLGVVR) traverse the membrane as a helical segment. Over 164–169 (NRKKTY) the chain is Cytoplasmic.

It belongs to the DsbB family.

It is found in the cell inner membrane. Its function is as follows. Required for disulfide bond formation in some periplasmic proteins. Acts by oxidizing the DsbA protein. This is Disulfide bond formation protein B 1 from Pseudomonas fluorescens (strain ATCC BAA-477 / NRRL B-23932 / Pf-5).